The following is a 455-amino-acid chain: MAKASRLTRSTGQPTEVSEGQVTGTSEMPPTGEEPSGHAESKPPASDPMSTPGTGQEQLPLSGIRVIDVGNFLAGPYAASILGEFGAEVLKIEHPLGGDPMRRFGTATARHDATLAWLSEARNRKSVTIDLRQQEGVALFLKLVAKSDILIENFRPGTMEEWGLSWPVLQATNPGLIMLRVSGYGQTGPYRRRSGFAHIAHAFSGLSYLAGFPGETPVLPGTAPLGDYIASLFGAIGILIALRHKEQTGRGQLIDVGIYEAVFRILDEIAPAYGLFGKIREREGAGSFIAVPHGHFRSKDGKWVAIACTTDKMFERLAEAMERPELASPELYGDQRKRLAARDIVNQITIEWVGSLTRDEVMRRCLEKEVPVGPLNSIADMFNDEHFLARGNFACIEAEGIGEVVVPNVIPRLSETPGRVTNLGPPLGNATYEVLRELLDISAEEIKRLRSRKII.

Positions 1-58 are disordered; the sequence is MAKASRLTRSTGQPTEVSEGQVTGTSEMPPTGEEPSGHAESKPPASDPMSTPGTGQEQ. Polar residues-rich tracts occupy residues 7 to 28 and 48 to 58; these read LTRSTGQPTEVSEGQVTGTSEM and PMSTPGTGQEQ. Asp227 acts as the Nucleophile in catalysis.

The protein belongs to the CoA-transferase III family. As to quaternary structure, forms a large complex composed of six heterodimers (alpha, beta).

The catalysed reaction is succinyl-CoA + (S)-malate = (S)-malyl-CoA + succinate. It catalyses the reaction (3S)-citramalate + succinyl-CoA = (3S)-citramalyl-CoA + succinate. In terms of biological role, involved in the 3-hydroxypropionate cycle used for autotrophic carbon dioxide fixation. Catalyzes the transfer of CoA moiety from succinyl-CoA to L-malate to yield L-malyl-CoA. In Chloroflexus aurantiacus (strain ATCC 29366 / DSM 635 / J-10-fl), this protein is Succinyl-CoA--L-malate CoA-transferase alpha subunit (smtA).